The chain runs to 446 residues: Glutamyl-tRNA reductase (446 aa).

Residues 49-52 (TCNR), serine 107, 112-114 (EPQ), and glutamine 118 each bind substrate. Residue cysteine 50 is the Nucleophile of the active site. Position 187-192 (187-192 (GAGETI)) interacts with NADP(+). The disordered stretch occupies residues 417–446 (NANEDTRESVDKEQTGTTQGAARGDQRSTG). The segment covering 420-430 (EDTRESVDKEQ) has biased composition (basic and acidic residues).

The protein belongs to the glutamyl-tRNA reductase family. Homodimer.

The catalysed reaction is (S)-4-amino-5-oxopentanoate + tRNA(Glu) + NADP(+) = L-glutamyl-tRNA(Glu) + NADPH + H(+). It functions in the pathway porphyrin-containing compound metabolism; protoporphyrin-IX biosynthesis; 5-aminolevulinate from L-glutamyl-tRNA(Glu): step 1/2. Its function is as follows. Catalyzes the NADPH-dependent reduction of glutamyl-tRNA(Glu) to glutamate 1-semialdehyde (GSA). The sequence is that of Glutamyl-tRNA reductase from Alkalilimnicola ehrlichii (strain ATCC BAA-1101 / DSM 17681 / MLHE-1).